The chain runs to 427 residues: SAC3 domain-containing protein 1 (427 aa).

Basic and acidic residues-rich tracts occupy residues 1–10 (MGRFKGENRS) and 117–127 (ADPKRTVKEYS). 2 disordered regions span residues 1 to 53 (MGRF…QDAV) and 101 to 143 (LHRL…LLRP). A compositionally biased stretch (pro residues) spans 134–143 (PRPPPSLLRP). In terms of domain architecture, PCI spans 229 to 397 (QVQEGFGSLR…EGLPPPGAYH (169 aa)). The residue at position 425 (S425) is a Phosphoserine.

This sequence belongs to the SAC3 family. May be part of a SEM1-containing complex. Present in spleen cells (at protein level).

It is found in the cytoplasm. The protein resides in the cytoskeleton. The protein localises to the microtubule organizing center. It localises to the centrosome. Its subcellular location is the spindle. In terms of biological role, involved in centrosome duplication and mitotic progression. In Mus musculus (Mouse), this protein is SAC3 domain-containing protein 1 (Sac3d1).